Here is a 543-residue protein sequence, read N- to C-terminus: Chaperonin GroEL (543 aa).

Residues 29–32 (TLGP), 86–90 (DGTTT), Gly413, 476–478 (NAA), and Asp492 contribute to the ATP site.

It belongs to the chaperonin (HSP60) family. As to quaternary structure, forms a cylinder of 14 subunits composed of two heptameric rings stacked back-to-back. Interacts with the co-chaperonin GroES.

It localises to the cytoplasm. The enzyme catalyses ATP + H2O + a folded polypeptide = ADP + phosphate + an unfolded polypeptide.. In terms of biological role, together with its co-chaperonin GroES, plays an essential role in assisting protein folding. The GroEL-GroES system forms a nano-cage that allows encapsulation of the non-native substrate proteins and provides a physical environment optimized to promote and accelerate protein folding. The protein is Chaperonin GroEL of Streptococcus pyogenes serotype M1.